A 395-amino-acid chain; its full sequence is MSERHLFTSESVSEGHPDKIADQISDAILDAMLAQDPQARVAVETSVTTGLVLVFGEVSTKAYVDIQKVVRDTIKSIGYVDGQYGFDGDNCAVLVSLDEQSPDIAQGVDDSLETRSGDADPLDQIGAGDQGMMFGYAINETPELMPLPIALSHRLMRKIAALRKDGTIKWLRPDAKAQVTVEYDEDNQPKRIDTVVLSTQHDPDVDLDTIRQTVIDQVIKAVLPADLLDDQTKYLVNPTGRFVIGGPQGDAGLTGRKVIVDTYGGFAHHGGGAFSGKDATKVDRSASYAARYIAKNVVAAGLADQVEVQLAYAIGVAEPVSIAVDTAGTGKVSDEALINAIRENFDLRPAGIIKMLDLQRPIYRQTAAYGHFGRTDIDLPWEHTDKVDALKAVFK.

His-16 lines the ATP pocket. Asp-18 serves as a coordination point for Mg(2+). Glu-44 is a K(+) binding site. 2 residues coordinate L-methionine: Glu-57 and Gln-100. The interval Gln-100–Asp-110 is flexible loop. ATP-binding positions include Asp-174–Lys-176, Arg-241–Phe-242, Asp-250, Arg-256–Lys-257, Ala-273, and Lys-277. L-methionine is bound at residue Asp-250. An L-methionine-binding site is contributed by Lys-281.

The protein belongs to the AdoMet synthase family. Homotetramer; dimer of dimers. Mg(2+) serves as cofactor. K(+) is required as a cofactor.

Its subcellular location is the cytoplasm. It carries out the reaction L-methionine + ATP + H2O = S-adenosyl-L-methionine + phosphate + diphosphate. It functions in the pathway amino-acid biosynthesis; S-adenosyl-L-methionine biosynthesis; S-adenosyl-L-methionine from L-methionine: step 1/1. Catalyzes the formation of S-adenosylmethionine (AdoMet) from methionine and ATP. The overall synthetic reaction is composed of two sequential steps, AdoMet formation and the subsequent tripolyphosphate hydrolysis which occurs prior to release of AdoMet from the enzyme. In Lactiplantibacillus plantarum (strain ATCC BAA-793 / NCIMB 8826 / WCFS1) (Lactobacillus plantarum), this protein is S-adenosylmethionine synthase.